The primary structure comprises 319 residues: 4-hydroxy-3-methylbut-2-enyl diphosphate reductase (319 aa).

Cysteine 18 is a [4Fe-4S] cluster binding site. (2E)-4-hydroxy-3-methylbut-2-enyl diphosphate contacts are provided by histidine 47 and histidine 81. Histidine 47 and histidine 81 together coordinate dimethylallyl diphosphate. Residues histidine 47 and histidine 81 each contribute to the isopentenyl diphosphate site. Cysteine 103 is a [4Fe-4S] cluster binding site. Histidine 131 is a binding site for (2E)-4-hydroxy-3-methylbut-2-enyl diphosphate. Histidine 131 is a binding site for dimethylallyl diphosphate. Histidine 131 provides a ligand contact to isopentenyl diphosphate. The active-site Proton donor is the glutamate 133. Threonine 172 lines the (2E)-4-hydroxy-3-methylbut-2-enyl diphosphate pocket. [4Fe-4S] cluster is bound at residue cysteine 202. (2E)-4-hydroxy-3-methylbut-2-enyl diphosphate-binding residues include serine 230, serine 231, asparagine 232, and serine 275. Dimethylallyl diphosphate contacts are provided by serine 230, serine 231, asparagine 232, and serine 275. Isopentenyl diphosphate is bound by residues serine 230, serine 231, asparagine 232, and serine 275.

The protein belongs to the IspH family. It depends on [4Fe-4S] cluster as a cofactor.

The catalysed reaction is isopentenyl diphosphate + 2 oxidized [2Fe-2S]-[ferredoxin] + H2O = (2E)-4-hydroxy-3-methylbut-2-enyl diphosphate + 2 reduced [2Fe-2S]-[ferredoxin] + 2 H(+). The enzyme catalyses dimethylallyl diphosphate + 2 oxidized [2Fe-2S]-[ferredoxin] + H2O = (2E)-4-hydroxy-3-methylbut-2-enyl diphosphate + 2 reduced [2Fe-2S]-[ferredoxin] + 2 H(+). Its pathway is isoprenoid biosynthesis; dimethylallyl diphosphate biosynthesis; dimethylallyl diphosphate from (2E)-4-hydroxy-3-methylbutenyl diphosphate: step 1/1. The protein operates within isoprenoid biosynthesis; isopentenyl diphosphate biosynthesis via DXP pathway; isopentenyl diphosphate from 1-deoxy-D-xylulose 5-phosphate: step 6/6. In terms of biological role, catalyzes the conversion of 1-hydroxy-2-methyl-2-(E)-butenyl 4-diphosphate (HMBPP) into a mixture of isopentenyl diphosphate (IPP) and dimethylallyl diphosphate (DMAPP). Acts in the terminal step of the DOXP/MEP pathway for isoprenoid precursor biosynthesis. This chain is 4-hydroxy-3-methylbut-2-enyl diphosphate reductase, found in Methylocella silvestris (strain DSM 15510 / CIP 108128 / LMG 27833 / NCIMB 13906 / BL2).